A 1193-amino-acid polypeptide reads, in one-letter code: Protein diaphanous homolog 3 (1193 aa).

Basic residues predominate over residues 1-10 (MERHQPRLHH). The tract at residues 1–57 (MERHQPRLHHPAQGSAAGTPYPSSASLRGCRESKMPRRKGPQHPPPPSGPEEPGEKR) is disordered. Ser26 is modified (phosphoserine). The short motif at 36–60 (PRRKGPQHPPPPSGPEEPGEKRPKF) is the Nuclear localization signal element. At Thr68 the chain carries Phosphothreonine. Phosphoserine is present on residues Ser77 and Ser175. Positions 114–476 (PKPLSENELL…QIVLHRDGMD (363 aa)) constitute a GBD/FH3 domain. Positions 497 to 554 (IDQAKLEEFEEKASELYKKFEKEFTDHQETQAELQKKEAKINELQAELQAFKSQFGAL) form a coiled coil. The tract at residues 558 to 622 (CNIPLPPSKE…PPPLGFLGGQ (65 aa)) is disordered. The region spanning 561-631 (PLPPSKEGGT…QNSPPLPILP (71 aa)) is the FH1 domain. Over residues 575-600 (LPPPPPLPSGGGVPPPPPPPPPPPLP) the composition is skewed to pro residues. Ser624 is modified (phosphoserine). Positions 636–1034 (PKKEFKPEIS…EKRVRIAKEL (399 aa)) constitute an FH2 domain. Residues 1013–1056 (KENIKKREAEEKEKRVRIAKELAERERLERQQKKKRLLEMKTEG) are a coiled coil. A DAD domain is found at 1057–1087 (DETGVMDNLLEALQSGAAFRDRRKRTPMPKD). 2 positions are modified to phosphoserine: Ser1093 and Ser1179. Residues 1184–1193 (EALLARLRAL) carry the Nuclear export signal motif.

It belongs to the formin homology family. Diaphanous subfamily. Ubiquitinated.

The protein resides in the cytoplasm. Its subcellular location is the nucleus. Its function is as follows. Actin nucleation and elongation factor required for the assembly of F-actin structures, such as actin cables and stress fibers. Required for cytokinesis, stress fiber formation and transcriptional activation of the serum response factor. Binds to GTP-bound form of Rho and to profilin: acts in a Rho-dependent manner to recruit profilin to the membrane, where it promotes actin polymerization. DFR proteins couple Rho and Src tyrosine kinase during signaling and the regulation of actin dynamics. Also acts as an actin nucleation and elongation factor in the nucleus by promoting nuclear actin polymerization inside the nucleus to drive serum-dependent SRF-MRTFA activity. The polypeptide is Protein diaphanous homolog 3 (DIAPH3) (Homo sapiens (Human)).